The sequence spans 280 residues: Putative sugar uptake protein (280 aa).

The next 10 helical transmembrane spans lie at 4–21, 33–52, 56–78, 91–113, 117–136, 149–166, 176–195, 207–229, 233–255, and 262–279; these read LIAL…LIAG, MGLG…IHPA, ITIF…GQFI, LSTG…EWTS, YLIG…LTAI, IILL…SSFP, LFLP…LLVS, WLNI…SAQL, ITAF…FFIG, and ELIA…GAAI.

The protein belongs to the GRP transporter (TC 2.A.7.5) family.

Its subcellular location is the cell membrane. In Lactobacillus helveticus (Lactobacillus suntoryeus), this protein is Putative sugar uptake protein.